The sequence spans 288 residues: 4-diphosphocytidyl-2-C-methyl-D-erythritol kinase (288 aa).

The active site involves Lys-11. 100–110 (PIAAGLGSGSS) contacts ATP. Asp-140 is an active-site residue.

It belongs to the GHMP kinase family. IspE subfamily.

The catalysed reaction is 4-CDP-2-C-methyl-D-erythritol + ATP = 4-CDP-2-C-methyl-D-erythritol 2-phosphate + ADP + H(+). Its pathway is isoprenoid biosynthesis; isopentenyl diphosphate biosynthesis via DXP pathway; isopentenyl diphosphate from 1-deoxy-D-xylulose 5-phosphate: step 3/6. Its function is as follows. Catalyzes the phosphorylation of the position 2 hydroxy group of 4-diphosphocytidyl-2C-methyl-D-erythritol. The protein is 4-diphosphocytidyl-2-C-methyl-D-erythritol kinase of Wolbachia pipientis wMel.